A 264-amino-acid chain; its full sequence is H-2 class II histocompatibility antigen, E-Q beta chain (264 aa).

The N-terminal stretch at 1-26 is a signal peptide; that stretch reads MVWLPRVPCVAAVILLLTVLSPPVAL. The interval 27-121 is beta-1; sequence VRDSRPWFLE…IFDNFLVRRR (95 aa). Residues 27-225 are Extracellular-facing; it reads VRDSRPWFLE…KAQSTSAQNK (199 aa). 2 cysteine pairs are disulfide-bonded: cysteine 38/cysteine 106 and cysteine 144/cysteine 200. A glycan (N-linked (GlcNAc...) asparagine) is linked at asparagine 46. The tract at residues 122-225 is beta-2; that stretch reads VEPTVTVYPT…KAQSTSAQNK (104 aa). One can recognise an Ig-like C1-type domain in the interval 124–214; that stretch reads PTVTVYPTKT…PSLTDPVTVE (91 aa). Residues 226–246 traverse the membrane as a helical segment; the sequence is MLSGVGGFVLGLLFLGAGLFI. Over 247–264 the chain is Cytoplasmic; the sequence is YFRNQKGQSGLQPTGLLS.

Belongs to the MHC class II family.

The protein resides in the membrane. The chain is H-2 class II histocompatibility antigen, E-Q beta chain from Mus musculus (Mouse).